A 253-amino-acid chain; its full sequence is 5'-nucleotidase SurE (253 aa).

4 residues coordinate a divalent metal cation: aspartate 8, aspartate 9, serine 39, and asparagine 92.

It belongs to the SurE nucleotidase family. The cofactor is a divalent metal cation.

It localises to the cytoplasm. It carries out the reaction a ribonucleoside 5'-phosphate + H2O = a ribonucleoside + phosphate. Its function is as follows. Nucleotidase that shows phosphatase activity on nucleoside 5'-monophosphates. The polypeptide is 5'-nucleotidase SurE (Burkholderia pseudomallei (strain 668)).